The following is an 880-amino-acid chain: uncharacterized protein (880 aa).

Disordered regions lie at residues 101 to 149, 191 to 224, 240 to 273, 294 to 350, 425 to 446, 470 to 508, 536 to 561, 580 to 613, 682 to 713, and 844 to 880; these read KPIP…LRSE, PETS…ISTH, TTTT…PILK, NSNS…STTS, QPDS…ESQP, STST…SSSS, MESS…NDNS, APQS…NDDE, NTNT…NINN, and NSSG…KSEI. A coiled-coil region spans residues 113–147; the sequence is ISIKEKEKEKEKEKEKEKEKEKEKEKEMKSTINLR. Basic and acidic residues predominate over residues 115–149; it reads IKEKEKEKEKEKEKEKEKEKEKEKEMKSTINLRSE. Low complexity-rich tracts occupy residues 193 to 223 and 240 to 256; these read TSTP…SIST and TTTT…PSSS. A compositionally biased stretch (polar residues) spans 257 to 271; sequence IAGITNPTSRSSSPI. Residues 294–332 are compositionally biased toward low complexity; that stretch reads NSNSSSGGGNNNNKSISTPSSPIISRPITNKINNNNNNN. The span at 333–342 shows a compositional bias: polar residues; sequence QPQLHYNQPQ. The span at 536–548 shows a compositional bias: low complexity; it reads MESSTTTTLLSEN. A compositionally biased stretch (acidic residues) spans 589–613; it reads QPEDDPFFDFEDLSDDDDSNDNDDE. A compositionally biased stretch (low complexity) spans 844 to 864; it reads NSSGSGNNSNDNSGSSSPSSS. The segment covering 865-880 has biased composition (polar residues); sequence KTNTLNQQSICIKSEI.

This is an uncharacterized protein from Dictyostelium discoideum (Social amoeba).